A 694-amino-acid chain; its full sequence is Elongation factor G (694 aa).

One can recognise a tr-type G domain in the interval 10–285 (EKTRNIGIMA…AVLDYLPSPV (276 aa)). GTP contacts are provided by residues 19 to 26 (AHIDAGKT), 83 to 87 (DTPGH), and 137 to 140 (NKMD).

The protein belongs to the TRAFAC class translation factor GTPase superfamily. Classic translation factor GTPase family. EF-G/EF-2 subfamily.

It localises to the cytoplasm. Functionally, catalyzes the GTP-dependent ribosomal translocation step during translation elongation. During this step, the ribosome changes from the pre-translocational (PRE) to the post-translocational (POST) state as the newly formed A-site-bound peptidyl-tRNA and P-site-bound deacylated tRNA move to the P and E sites, respectively. Catalyzes the coordinated movement of the two tRNA molecules, the mRNA and conformational changes in the ribosome. This is Elongation factor G from Limosilactobacillus fermentum (strain NBRC 3956 / LMG 18251) (Lactobacillus fermentum).